A 71-amino-acid chain; its full sequence is Disintegrin halysin (71 aa).

A Disintegrin domain is found at 1 to 71; the sequence is EAGEECDCGS…ISAGCPRNPF (71 aa). 6 cysteine pairs are disulfide-bonded: Cys6–Cys21, Cys8–Cys16, Cys15–Cys38, Cys29–Cys35, Cys34–Cys59, and Cys47–Cys66. Positions 51-53 match the Cell attachment site motif; the sequence is RGD.

Belongs to the venom metalloproteinase (M12B) family. P-II subfamily. P-IIa sub-subfamily. In terms of assembly, monomer. In terms of tissue distribution, expressed by the venom gland.

The protein localises to the secreted. Its function is as follows. Inhibits fibrinogen interaction with platelets. Acts by binding to alpha-IIb/beta-3 (ITGA2B/ITGB3) on the platelet surface and inhibits aggregation induced by ADP, thrombin, platelet-activating factor and collagen. The sequence is that of Disintegrin halysin from Gloydius blomhoffii (Mamushi).